A 392-amino-acid polypeptide reads, in one-letter code: Putative cystathionine gamma-lyase 2 (392 aa).

A disordered region spans residues 32 to 55; the sequence is LSSTYKQDNPGEPKGHDYSRAGNP. Positions 40–50 are enriched in basic and acidic residues; sequence NPGEPKGHDYS. Arginine 51, tyrosine 103, and arginine 108 together coordinate substrate. Lysine 203 is subject to N6-(pyridoxal phosphate)lysine. Glutamate 330 is a substrate binding site.

The protein belongs to the trans-sulfuration enzymes family. The cofactor is pyridoxal 5'-phosphate.

The protein localises to the cytoplasm. The catalysed reaction is L,L-cystathionine + H2O = 2-oxobutanoate + L-cysteine + NH4(+). Its pathway is amino-acid biosynthesis; L-cysteine biosynthesis; L-cysteine from L-homocysteine and L-serine: step 2/2. This is Putative cystathionine gamma-lyase 2 (cth-2) from Caenorhabditis elegans.